Consider the following 927-residue polypeptide: Echinoderm microtubule-associated protein-like 4 (927 aa).

The segment at 1-189 (MDGFAGSLDD…IPSDVENYDD (189 aa)) is microtubule-binding. Residues 14-63 (AASTSDVQDRLSALELRVQQQEDEITVLKAALADVLRRLAISEDQVATVR) adopt a coiled-coil conformation. The tract at residues 85 to 132 (NGGAGTRKPSHASSVAKKDTLSSAAKSVKRSSTLEKSHNSWDASEESR) is disordered. Residues 116–132 (STLEKSHNSWDASEESR) show a composition bias toward basic and acidic residues. WD repeat units lie at residues 199–237 (LKLE…LFNY), 241–288 (TQRH…VWDS), 296–336 (VIGL…VWDW), 343–378 (AEIK…FWTW), 385–424 (RKQG…IWSK), 442–480 (QISK…MWDH), 485–521 (EREI…LRGT), 524–563 (DGFQ…LWNS), 567–604 (SLEW…VLDA), 610–646 (VSIH…LYNV), 653–692 (YSRY…YWDI), 702–760 (RSEC…LFQY), and 767–806 (APSH…QWRL). A compositionally biased stretch (polar residues) spans 815 to 829 (NDNIAESSSAVNSPV). Positions 815–927 (NDNIAESSSA…NQDDDDAPLS (113 aa)) are disordered. Acidic residues predominate over residues 914-927 (AQDENQDDDDAPLS).

This sequence belongs to the WD repeat EMAP family. As to quaternary structure, homotrimer; self-association is mediated by the N-terminal coiled coil.

The protein resides in the cytoplasm. It is found in the cytoskeleton. Its subcellular location is the spindle. The protein localises to the microtubule organizing center. It localises to the midbody. Functionally, essential for the formation and stability of microtubules (MTs). Required for the organization of the mitotic spindle and for the proper attachment of kinetochores to MTs. Promotes the recruitment of NUDC to the mitotic spindle for mitotic progression. The polypeptide is Echinoderm microtubule-associated protein-like 4 (eml4) (Xenopus laevis (African clawed frog)).